We begin with the raw amino-acid sequence, 446 residues long: Probable glycine dehydrogenase (decarboxylating) subunit 1 (446 aa).

Belongs to the GcvP family. N-terminal subunit subfamily. As to quaternary structure, the glycine cleavage system is composed of four proteins: P, T, L and H. In this organism, the P 'protein' is a heterodimer of two subunits.

The catalysed reaction is N(6)-[(R)-lipoyl]-L-lysyl-[glycine-cleavage complex H protein] + glycine + H(+) = N(6)-[(R)-S(8)-aminomethyldihydrolipoyl]-L-lysyl-[glycine-cleavage complex H protein] + CO2. Functionally, the glycine cleavage system catalyzes the degradation of glycine. The P protein binds the alpha-amino group of glycine through its pyridoxal phosphate cofactor; CO(2) is released and the remaining methylamine moiety is then transferred to the lipoamide cofactor of the H protein. The polypeptide is Probable glycine dehydrogenase (decarboxylating) subunit 1 (Thermococcus onnurineus (strain NA1)).